The chain runs to 553 residues: Solute carrier family 22 member 4 (553 aa).

Over 1–20 (MRDYDEVIAFLGEWGPFQRL) the chain is Cytoplasmic. Residues 21–41 (IFFLLSASIIPNGFNGMSVVF) form a helical membrane-spanning segment. Topologically, residues 42-142 (LAGTPEHRCL…NLVCEDDWKT (101 aa)) are extracellular. N-linked (GlcNAc...) asparagine glycans are attached at residues N57, N64, and N91. The helical transmembrane segment at 143–163 (PLTTSLFFVGVLCGSFVSGQL) threads the bilayer. Topologically, residues 164–171 (SDRFGRKK) are cytoplasmic. Residues 172–192 (VLFATMAVQTGFSFVQIFSTN) form a helical membrane-spanning segment. Topologically, residues 193–197 (WEMFT) are extracellular. Residues 198 to 218 (VLFAIVGMGQISNYVVAFILG) traverse the membrane as a helical segment. 218 to 225 (GTEILSKS) is an ATP binding site. Residues 219 to 232 (TEILSKSVRIIFST) lie on the Cytoplasmic side of the membrane. Residues 233–253 (LGVCTFFAIGYMVLPLFAYFI) traverse the membrane as a helical segment. At 254–257 (RDWR) the chain is on the extracellular side. Residues 258–278 (MLLLALTLPGLFCVPLWWFIP) form a helical membrane-spanning segment. The Cytoplasmic portion of the chain corresponds to 279–339 (ESPRWLISQR…IILDLFRTRN (61 aa)). The chain crosses the membrane as a helical span at residues 340-360 (IATITVMAVMLWMLTSVGYFA). Residues 361–373 (LSLNVPNLHGDVY) lie on the Extracellular side of the membrane. Residues 374 to 394 (LNCFLSGLIEVPAYFTAWLLL) form a helical membrane-spanning segment. Residues 395–400 (RTLPRR) are Cytoplasmic-facing. The chain crosses the membrane as a helical span at residues 401–421 (YIIAGVLFWGGGVLLLIQVVP). Residues 422–428 (EDYNFVS) lie on the Extracellular side of the membrane. A helical membrane pass occupies residues 429 to 449 (IGLVMLGKFGITSAFSMLYVF). Residues 450–462 (TAELYPTLVRNMA) are Cytoplasmic-facing. The chain crosses the membrane as a helical span at residues 463–483 (VGITSMASRVGSIIAPYFVYL). Over 484–488 (GAYNR) the chain is Extracellular. The helical transmembrane segment at 489–509 (LLPYILMGSLTVLIGIITLFF) threads the bilayer. The Cytoplasmic portion of the chain corresponds to 510–553 (PESFGVTLPENLEQMQKVRGFRCGKKSTVSVDREESPKVLITAF).

The protein belongs to the major facilitator (TC 2.A.1) superfamily. Organic cation transporter (TC 2.A.1.19) family. As to quaternary structure, interacts with PDZK1. As to expression, expressed in kidney. Expressed in small intestines. Expressed in liver in non-parenchymal liver tissue such as sinusoidal vessels. Weakly expressed in lung and brain. Expressed in testis and spleen. Expressed in heart.

It localises to the apical cell membrane. Its subcellular location is the mitochondrion membrane. It is found in the basal cell membrane. It catalyses the reaction ergothioneine(out) + Na(+)(out) = ergothioneine(in) + Na(+)(in). The enzyme catalyses acetylcholine(in) = acetylcholine(out). The catalysed reaction is (R)-carnitine(out) + Na(+)(out) = (R)-carnitine(in) + Na(+)(in). It carries out the reaction glycine betaine(out) + Na(+)(out) = glycine betaine(in) + Na(+)(in). Its activity is regulated as follows. Allosterically activated by intracellular ATP. In terms of biological role, transporter that mediates the transport of endogenous and microbial zwitterions and organic cations. Functions as a Na(+)-dependent and pH-dependent high affinity microbial symporter of potent food-derived antioxidant ergothioeine. Transports one sodium ion with one ergothioeine molecule. Involved in the absorption of ergothioneine from the luminal/apical side of the small intestine and renal tubular cells, and into non-parenchymal liver cells, thereby contributing to maintain steady-state ergothioneine level in the body. Also mediates the bidirectional transport of acetycholine, although the exact transport mechanism has not been fully identified yet. Most likely exports anti-inflammatory acetylcholine in non-neuronal tissues, thereby contributing to the non-neuronal cholinergic system. Displays a general physiological role linked to better survival by controlling inflammation and oxidative stress, which may be related to ergothioneine and acetycholine transports. May also function as a low-affinity Na(+)-dependent transporter of L-carnitine through the mitochondrial membrane, thereby maintaining intracellular carnitine homeostasis. May contribute to regulate the transport of cationic compounds in testis across the blood-testis-barrier. This Mus musculus (Mouse) protein is Solute carrier family 22 member 4.